A 91-amino-acid chain; its full sequence is Transcription factor ILI3 (91 aa).

A bHLH domain is found at 3–58 (SRRGGGGGGGRITDEEINELISKLQALLPESSRSRGASRSSASKLLKETCSYIKSL).

Belongs to the bHLH protein family.

Atypical and probable non DNA-binding bHLH transcription that integrates multiple signaling pathways to regulate cell elongation and plant development. This is Transcription factor ILI3 (ILI3) from Oryza sativa subsp. indica (Rice).